The primary structure comprises 137 residues: Nucleoside diphosphate kinase (137 aa).

The ATP site is built by K9, F57, R85, T91, R102, and N112. The Pros-phosphohistidine intermediate role is filled by H115.

Belongs to the NDK family. Homotetramer. It depends on Mg(2+) as a cofactor.

It is found in the cytoplasm. The catalysed reaction is a 2'-deoxyribonucleoside 5'-diphosphate + ATP = a 2'-deoxyribonucleoside 5'-triphosphate + ADP. The enzyme catalyses a ribonucleoside 5'-diphosphate + ATP = a ribonucleoside 5'-triphosphate + ADP. Functionally, major role in the synthesis of nucleoside triphosphates other than ATP. The ATP gamma phosphate is transferred to the NDP beta phosphate via a ping-pong mechanism, using a phosphorylated active-site intermediate. The sequence is that of Nucleoside diphosphate kinase from Wolinella succinogenes (strain ATCC 29543 / DSM 1740 / CCUG 13145 / JCM 31913 / LMG 7466 / NCTC 11488 / FDC 602W) (Vibrio succinogenes).